Consider the following 367-residue polypeptide: Anhydro-N-acetylmuramic acid kinase (367 aa).

Position 13–20 (13–20 (GTSMDGAD)) interacts with ATP.

The protein belongs to the anhydro-N-acetylmuramic acid kinase family.

It catalyses the reaction 1,6-anhydro-N-acetyl-beta-muramate + ATP + H2O = N-acetyl-D-muramate 6-phosphate + ADP + H(+). It participates in amino-sugar metabolism; 1,6-anhydro-N-acetylmuramate degradation. Its pathway is cell wall biogenesis; peptidoglycan recycling. Catalyzes the specific phosphorylation of 1,6-anhydro-N-acetylmuramic acid (anhMurNAc) with the simultaneous cleavage of the 1,6-anhydro ring, generating MurNAc-6-P. Is required for the utilization of anhMurNAc either imported from the medium or derived from its own cell wall murein, and thus plays a role in cell wall recycling. The protein is Anhydro-N-acetylmuramic acid kinase of Neisseria meningitidis serogroup B (strain ATCC BAA-335 / MC58).